The chain runs to 460 residues: Lipase member H (460 aa).

Positions 1–24 (MLLRFYFNGLLFVGCLLSWGRSDT) are cleaved as a signal peptide. N67 and N75 each carry an N-linked (GlcNAc...) asparagine glycan. S163 (nucleophile) is an active-site residue. N177 carries an N-linked (GlcNAc...) asparagine glycan. The active-site Charge relay system is D187. C242 and C255 form a disulfide bridge. The active-site Charge relay system is the H257. 2 cysteine pairs are disulfide-bonded: C279–C290 and C293–C301. An N-linked (GlcNAc...) asparagine glycan is attached at N289. Residue N366 is glycosylated (N-linked (GlcNAc...) asparagine). A disulfide bridge connects residues C436 and C455.

The protein belongs to the AB hydrolase superfamily. Lipase family.

It is found in the secreted. It localises to the cell membrane. It carries out the reaction 1-hexadecanoyl-2-(9Z-octadecenoyl)-sn-glycero-3-phosphate + H2O = 2-(9Z-octadecenoyl)-sn-glycero-3-phosphate + hexadecanoate + H(+). Its function is as follows. Hydrolyzes specifically phosphatidic acid (PA) to produce 2-acyl lysophosphatidic acid (LPA; a potent bioactive lipid mediator) and fatty acid. Does not hydrolyze other phospholipids, like phosphatidylserine (PS), phosphatidylcholine (PC) and phosphatidylethanolamine (PE) or triacylglycerol (TG). The protein is Lipase member H (liph) of Xenopus tropicalis (Western clawed frog).